Here is a 59-residue protein sequence, read N- to C-terminus: Large ribosomal subunit protein uL30 (59 aa).

The protein belongs to the universal ribosomal protein uL30 family. Part of the 50S ribosomal subunit.

This chain is Large ribosomal subunit protein uL30, found in Stutzerimonas stutzeri (strain A1501) (Pseudomonas stutzeri).